The chain runs to 213 residues: tRNA (guanine-N(7)-)-methyltransferase (213 aa).

Positions 43, 68, 95, and 117 each coordinate S-adenosyl-L-methionine. Residues Asp-153 and 190–193 (TEYE) contribute to the substrate site.

This sequence belongs to the class I-like SAM-binding methyltransferase superfamily. TrmB family.

The enzyme catalyses guanosine(46) in tRNA + S-adenosyl-L-methionine = N(7)-methylguanosine(46) in tRNA + S-adenosyl-L-homocysteine. Its pathway is tRNA modification; N(7)-methylguanine-tRNA biosynthesis. In terms of biological role, catalyzes the formation of N(7)-methylguanine at position 46 (m7G46) in tRNA. The sequence is that of tRNA (guanine-N(7)-)-methyltransferase from Desulfitobacterium hafniense (strain DSM 10664 / DCB-2).